The primary structure comprises 1102 residues: Carbamoyl phosphate synthase large chain (1102 aa).

The tract at residues 1–408 (MPKRTDIQSV…AFQKALRSLE (408 aa)) is carboxyphosphate synthetic domain. Positions 129, 175, 181, 182, 214, 216, 221, 247, 248, 249, 291, and 305 each coordinate ATP. An ATP-grasp 1 domain is found at 137–334 (EEVRKKIGHG…IAKIAAKLAV (198 aa)). The Mg(2+) site is built by glutamine 291, glutamate 305, and asparagine 307. Positions 291, 305, and 307 each coordinate Mn(2+). Residues 409–551 (KKGSQFTFVG…YFYSSYDEES (143 aa)) form an oligomerization domain region. The interval 552-954 (EVAPREKPAV…AYAKSQAGAY (403 aa)) is carbamoyl phosphate synthetic domain. Residues 682–873 (GRVLAEAGLP…LAKAAARISL (192 aa)) enclose the ATP-grasp 2 domain. ATP contacts are provided by arginine 718, arginine 757, leucine 759, glutamate 764, glycine 789, isoleucine 790, histidine 791, serine 792, glutamine 832, and glutamate 844. Residues glutamine 832, glutamate 844, and asparagine 846 each coordinate Mg(2+). Mn(2+) contacts are provided by glutamine 832, glutamate 844, and asparagine 846. Positions 955 to 1100 (GPLPTKGRAF…QEHAAFLIAA (146 aa)) constitute an MGS-like domain. The allosteric domain stretch occupies residues 955-1102 (GPLPTKGRAF…HAAFLIAARD (148 aa)).

This sequence belongs to the CarB family. In terms of assembly, composed of two chains; the small (or glutamine) chain promotes the hydrolysis of glutamine to ammonia, which is used by the large (or ammonia) chain to synthesize carbamoyl phosphate. Tetramer of heterodimers (alpha,beta)4. Mg(2+) is required as a cofactor. The cofactor is Mn(2+).

The catalysed reaction is hydrogencarbonate + L-glutamine + 2 ATP + H2O = carbamoyl phosphate + L-glutamate + 2 ADP + phosphate + 2 H(+). It carries out the reaction hydrogencarbonate + NH4(+) + 2 ATP = carbamoyl phosphate + 2 ADP + phosphate + 2 H(+). The protein operates within amino-acid biosynthesis; L-arginine biosynthesis; carbamoyl phosphate from bicarbonate: step 1/1. Its pathway is pyrimidine metabolism; UMP biosynthesis via de novo pathway; (S)-dihydroorotate from bicarbonate: step 1/3. Functionally, large subunit of the glutamine-dependent carbamoyl phosphate synthetase (CPSase). CPSase catalyzes the formation of carbamoyl phosphate from the ammonia moiety of glutamine, carbonate, and phosphate donated by ATP, constituting the first step of 2 biosynthetic pathways, one leading to arginine and/or urea and the other to pyrimidine nucleotides. The large subunit (synthetase) binds the substrates ammonia (free or transferred from glutamine from the small subunit), hydrogencarbonate and ATP and carries out an ATP-coupled ligase reaction, activating hydrogencarbonate by forming carboxy phosphate which reacts with ammonia to form carbamoyl phosphate. The sequence is that of Carbamoyl phosphate synthase large chain from Streptomyces coelicolor (strain ATCC BAA-471 / A3(2) / M145).